Here is a 194-residue protein sequence, read N- to C-terminus: dTTP/UTP pyrophosphatase (194 aa).

The active-site Proton acceptor is the Asp-69.

Belongs to the Maf family. YhdE subfamily. Requires a divalent metal cation as cofactor.

Its subcellular location is the cytoplasm. The enzyme catalyses dTTP + H2O = dTMP + diphosphate + H(+). It carries out the reaction UTP + H2O = UMP + diphosphate + H(+). Nucleoside triphosphate pyrophosphatase that hydrolyzes dTTP and UTP. May have a dual role in cell division arrest and in preventing the incorporation of modified nucleotides into cellular nucleic acids. The polypeptide is dTTP/UTP pyrophosphatase (Symbiobacterium thermophilum (strain DSM 24528 / JCM 14929 / IAM 14863 / T)).